A 248-amino-acid chain; its full sequence is Triosephosphate isomerase (248 aa).

Substrate is bound by residues Asn-11 and Lys-13. The Electrophile role is filled by His-95. Catalysis depends on Glu-165, which acts as the Proton acceptor.

The protein belongs to the triosephosphate isomerase family. In terms of assembly, homodimer.

It is found in the cytoplasm. The enzyme catalyses D-glyceraldehyde 3-phosphate = dihydroxyacetone phosphate. It carries out the reaction dihydroxyacetone phosphate = methylglyoxal + phosphate. It functions in the pathway carbohydrate degradation; glycolysis; D-glyceraldehyde 3-phosphate from glycerone phosphate: step 1/1. The protein operates within carbohydrate biosynthesis; gluconeogenesis. Functionally, triosephosphate isomerase is an extremely efficient metabolic enzyme that catalyzes the interconversion between dihydroxyacetone phosphate (DHAP) and D-glyceraldehyde-3-phosphate (G3P) in glycolysis and gluconeogenesis. Its function is as follows. It is also responsible for the non-negligible production of methylglyoxal a reactive cytotoxic side-product that modifies and can alter proteins, DNA and lipids. This Oryzias latipes (Japanese rice fish) protein is Triosephosphate isomerase (tpi1).